A 258-amino-acid polypeptide reads, in one-letter code: Phosphate import ATP-binding protein PstB (258 aa).

Residues 5 to 247 form the ABC transporter domain; sequence IDVSGLTAYY…SQIFSNPKEK (243 aa). ATP is bound at residue 37 to 44; it reads GPSGCGKS.

It belongs to the ABC transporter superfamily. Phosphate importer (TC 3.A.1.7) family. In terms of assembly, the complex is composed of two ATP-binding proteins (PstB), two transmembrane proteins (PstC and PstA) and a solute-binding protein (PstS).

It localises to the cell membrane. It catalyses the reaction phosphate(out) + ATP + H2O = ADP + 2 phosphate(in) + H(+). In terms of biological role, part of the ABC transporter complex PstSACB involved in phosphate import. Responsible for energy coupling to the transport system. The chain is Phosphate import ATP-binding protein PstB from Frankia casuarinae (strain DSM 45818 / CECT 9043 / HFP020203 / CcI3).